A 178-amino-acid polypeptide reads, in one-letter code: Protein modigliani (178 aa).

In terms of assembly, probably homodimerizes. Component of the MTV complex, composed of moi/modigliani, tea and ver/verrocchio. Interacts with ver/verrochio and tea (via C-terminus); the interactions are direct and require fully intact moi/modigliani and ver/verrocchio. The MTV complex is recruited to telomeres by the HipHop-HOAP complex, consisting of HipHop, cav/HOAP and Su(var)205/HP1 to form the terminin telomere-capping complex. Interacts with cav/HOAP and Su(var)205/HP1; the interactions are direct. Probably interacts with peo (via N-terminus and UBC domain).

The protein localises to the nucleus. It is found in the chromosome. Its subcellular location is the telomere. Part of the MTV complex that associates with the HipHop-HOAP complex to form the terminin telomere-capping complex involved in telomere maintenance and prevention of telomere fusion. Potentially functions downstream of mei-41/ATR. As part of the MTV complex binds single stranded DNA in a sequence-independent manner, protecting it from degradation. The chain is Protein modigliani from Drosophila melanogaster (Fruit fly).